We begin with the raw amino-acid sequence, 111 residues long: Beta-2-microglobulin (111 aa).

The signal sequence occupies residues 1-17; that stretch reads MRALILLSLGLLRVAVP. An Ig-like C1-type domain is found at 20–111; sequence PQVVVYTYKP…KTSIYKLESF (92 aa).

This sequence belongs to the beta-2-microglobulin family. Heterodimer of an alpha chain and a beta chain. Beta-2-microglobulin is the beta-chain of major histocompatibility complex class I molecules.

The protein resides in the secreted. Its function is as follows. Component of the class I major histocompatibility complex (MHC). Involved in the presentation of peptide antigens to the immune system. The chain is Beta-2-microglobulin (b2m) from Rostroraja eglanteria (Clearnose skate).